The primary structure comprises 459 residues: Aluminum-activated malate transporter 1 (459 aa).

At 1-52 (MDIDHGRESDGEMVGTIASCGLLLHSLLAGLGRRAAGFARKVGGAAREDPRR) the chain is on the extracellular side. Helical transmembrane passes span 53–73 (VAHS…YFVT) and 74–94 (PLFN…VVVM). The Extracellular portion of the chain corresponds to 95 to 108 (EYTVGATLSKGLNR). A helical membrane pass occupies residues 109 to 129 (ALATLVAGCIAVGAHQLAELA). The Cytoplasmic segment spans residues 130-137 (ERCGDQGE). The helical transmembrane segment at 138–158 (PIVLTVLVFFVASAATFLRFI) threads the bilayer. Topologically, residues 159–160 (PE) are extracellular. The helical transmembrane segment at 161–181 (IKAKYDYGVTIFILTFGLVAV) threads the bilayer. At 182–199 (SSYRVEELIQLAHQRFYT) the chain is on the cytoplasmic side. Residues 200–220 (IAVGVFICLCTTVFLFPVWAG) traverse the membrane as a helical segment. The Extracellular segment spans residues 221–459 (EDVHKLASGN…DEPLPDVVIL (239 aa)).

It belongs to the aromatic acid exporter (TC 2.A.85) family. In terms of tissue distribution, detected in root tips.

Its subcellular location is the cell membrane. Activated by external aluminum. The enhancement of malate transport is not due to alteration in the selectivity properties but is due to an increased anion permeability. Its function is as follows. Malate transporter critical for aluminum tolerance. Permeable to chloride, nitrate, sulfate and malate. The polypeptide is Aluminum-activated malate transporter 1 (ALMT1) (Triticum aestivum (Wheat)).